The following is a 306-amino-acid chain: Plant-type L-asparaginase (306 aa).

T176 functions as the Nucleophile in the catalytic mechanism. Residues 203–206 (RVGD) and 225–228 (TGLG) each bind substrate.

The protein belongs to the Ntn-hydrolase family. Heterotetramer of two alpha and two beta chains arranged as a dimer of alpha/beta heterodimers. Post-translationally, autocleaved. Generates the alpha and beta subunits. The N-terminal residue of the beta subunit is thought to be responsible for the nucleophile hydrolase activity.

It catalyses the reaction L-asparagine + H2O = L-aspartate + NH4(+). Functionally, catalyzes the hydrolysis of L-asparagine into L-aspartate and ammonia. In Pyrococcus furiosus (strain ATCC 43587 / DSM 3638 / JCM 8422 / Vc1), this protein is Plant-type L-asparaginase.